The following is a 184-amino-acid chain: MNKGNLIENYAVALFNNAMVDNIQDKIFEEITSINRIITDNFDIREFLFSPIVNKNDKINAVNSLAKNIKISTIVQNFLLLLVKNSRIAILSNIVDAYNTLLYESKNIKIVQVISANKLQPKEQEWIKSRIEKELNQKTEILFDIDNTIIGGIVIKYDSMLQDYSIKGSLEKITKALKTVNIAV.

The protein belongs to the ATPase delta chain family. In terms of assembly, F-type ATPases have 2 components, F(1) - the catalytic core - and F(0) - the membrane proton channel. F(1) has five subunits: alpha(3), beta(3), gamma(1), delta(1), epsilon(1). F(0) has three main subunits: a(1), b(2) and c(10-14). The alpha and beta chains form an alternating ring which encloses part of the gamma chain. F(1) is attached to F(0) by a central stalk formed by the gamma and epsilon chains, while a peripheral stalk is formed by the delta and b chains.

The protein resides in the cell inner membrane. F(1)F(0) ATP synthase produces ATP from ADP in the presence of a proton or sodium gradient. F-type ATPases consist of two structural domains, F(1) containing the extramembraneous catalytic core and F(0) containing the membrane proton channel, linked together by a central stalk and a peripheral stalk. During catalysis, ATP synthesis in the catalytic domain of F(1) is coupled via a rotary mechanism of the central stalk subunits to proton translocation. Its function is as follows. This protein is part of the stalk that links CF(0) to CF(1). It either transmits conformational changes from CF(0) to CF(1) or is implicated in proton conduction. The chain is ATP synthase subunit delta from Rickettsia peacockii (strain Rustic).